The sequence spans 147 residues: Ribonuclease 4 (147 aa).

The N-terminal stretch at 1–28 (MALQRTHSLLLLLLLTLLGLGLVQPSYG) is a signal peptide. The residue at position 29 (Gln-29) is a Pyrrolidone carboxylic acid. DUMP is bound by residues Arg-35, His-40, Lys-68, Asn-71, and Thr-72. Catalysis depends on His-40, which acts as the Proton acceptor. 4 disulfide bridges follow: Cys-53-Cys-109, Cys-67-Cys-120, Cys-85-Cys-135, and Cys-92-Cys-99. The active-site Proton donor is His-144. Phe-145 contacts dUMP.

It belongs to the pancreatic ribonuclease family.

It localises to the secreted. In terms of biological role, cleaves preferentially after uridine bases. Has antimicrobial activity against uropathogenic E.coli (UPEC). Probably contributes to urinary tract sterility. The sequence is that of Ribonuclease 4 (RNASE4) from Pongo abelii (Sumatran orangutan).